The primary structure comprises 288 residues: MGLFDRKEKYIRINPNRYVRNGVDHHVPEVPDDLFAKCPGCKQAIYQKDLGQAKICPNCSYAFRISAKERLDLTVDEGSFQELFTGIKTENPLNFPGYMEKLAATKEKTGLDEAVVTGVATIKGQKTALAIMDSNFIMASMGTVVGEKITKLFEYAILEKLPVVIFTASGGARMQEGIMSLMQMAKISAAVKRHSNAGLLYLTVLTDPTTGGVTASFAMQGDIILAEPQTLIGFAGRRVIENTVRETLPDDFQKAEFLQEHGFVDAIVKRTELADTIATLLSFHGGVQ.

A CoA carboxyltransferase N-terminal domain is found at 34 to 288; the sequence is LFAKCPGCKQ…TLLSFHGGVQ (255 aa). Residues Cys38, Cys41, Cys56, and Cys59 each coordinate Zn(2+). Residues 38–59 form a C4-type zinc finger; the sequence is CPGCKQAIYQKDLGQAKICPNC.

This sequence belongs to the AccD/PCCB family. As to quaternary structure, acetyl-CoA carboxylase is a heterohexamer composed of biotin carboxyl carrier protein (AccB), biotin carboxylase (AccC) and two subunits each of ACCase subunit alpha (AccA) and ACCase subunit beta (AccD). Requires Zn(2+) as cofactor.

The protein localises to the cytoplasm. The catalysed reaction is N(6)-carboxybiotinyl-L-lysyl-[protein] + acetyl-CoA = N(6)-biotinyl-L-lysyl-[protein] + malonyl-CoA. It participates in lipid metabolism; malonyl-CoA biosynthesis; malonyl-CoA from acetyl-CoA: step 1/1. Functionally, component of the acetyl coenzyme A carboxylase (ACC) complex. Biotin carboxylase (BC) catalyzes the carboxylation of biotin on its carrier protein (BCCP) and then the CO(2) group is transferred by the transcarboxylase to acetyl-CoA to form malonyl-CoA. In Streptococcus thermophilus (strain CNRZ 1066), this protein is Acetyl-coenzyme A carboxylase carboxyl transferase subunit beta.